We begin with the raw amino-acid sequence, 230 residues long: ATP synthase subunit a (230 aa).

5 helical membrane passes run 17–37, 78–98, 107–127, 165–187, and 198–218; these read LPITQSVLTTWFIMISLFIMA, IFPFVATLWIFILVSNLIGVI, DLSVTASLAIMTFLSVHWFGI, LFGNIMSLQLTALIVLMIAGFLV, and EAIIQAYIFGMLALIYIAGGI.

The protein belongs to the ATPase A chain family. In terms of assembly, F-type ATPases have 2 components, CF(1) - the catalytic core - and CF(0) - the membrane proton channel. CF(1) has five subunits: alpha(3), beta(3), gamma(1), delta(1), epsilon(1). CF(0) has three main subunits: a(1), b(2) and c(9-12). The alpha and beta chains form an alternating ring which encloses part of the gamma chain. CF(1) is attached to CF(0) by a central stalk formed by the gamma and epsilon chains, while a peripheral stalk is formed by the delta and b chains.

The protein localises to the cell inner membrane. In terms of biological role, key component of the proton channel; it plays a direct role in the translocation of protons across the membrane. This chain is ATP synthase subunit a, found in Legionella pneumophila subsp. pneumophila (strain Philadelphia 1 / ATCC 33152 / DSM 7513).